The chain runs to 275 residues: Large ribosomal subunit protein uL2 (275 aa).

Positions 223–275 are disordered; sequence AAMNANDHPHGGGEAKAGQGNPHPVTPWGVPTKGYKTRKNKRTQQFIVRDRRG.

The protein belongs to the universal ribosomal protein uL2 family. In terms of assembly, part of the 50S ribosomal subunit. Forms a bridge to the 30S subunit in the 70S ribosome.

Its function is as follows. One of the primary rRNA binding proteins. Required for association of the 30S and 50S subunits to form the 70S ribosome, for tRNA binding and peptide bond formation. It has been suggested to have peptidyltransferase activity; this is somewhat controversial. Makes several contacts with the 16S rRNA in the 70S ribosome. The protein is Large ribosomal subunit protein uL2 of Xanthomonas campestris pv. campestris (strain 8004).